The following is a 507-amino-acid chain: 2,3-bisphosphoglycerate-independent phosphoglycerate mutase (507 aa).

The Mn(2+) site is built by D13 and S63. S63 functions as the Phosphoserine intermediate in the catalytic mechanism. Substrate-binding positions include H124, 153-154 (RD), R183, R189, 254-257 (RADR), and K330. Mn(2+) contacts are provided by D396, H400, D437, H438, and H456.

It belongs to the BPG-independent phosphoglycerate mutase family. As to quaternary structure, monomer. It depends on Mn(2+) as a cofactor.

It catalyses the reaction (2R)-2-phosphoglycerate = (2R)-3-phosphoglycerate. The protein operates within carbohydrate degradation; glycolysis; pyruvate from D-glyceraldehyde 3-phosphate: step 3/5. Catalyzes the interconversion of 2-phosphoglycerate and 3-phosphoglycerate. The chain is 2,3-bisphosphoglycerate-independent phosphoglycerate mutase from Paracoccus denitrificans (strain Pd 1222).